Reading from the N-terminus, the 135-residue chain is NAD(P)H-quinone oxidoreductase subunit 3 (135 aa).

3 consecutive transmembrane segments (helical) span residues 15-35 (LMFVLPGYDAFLGFLLIAAAV), 79-99 (MFALVFVIFDVETVFLYPWAV), and 104-124 (LGLLAFIEALVFITILLVALA).

The protein belongs to the complex I subunit 3 family. NDH-1 can be composed of about 15 different subunits; different subcomplexes with different compositions have been identified which probably have different functions.

The protein resides in the cellular thylakoid membrane. The enzyme catalyses a plastoquinone + NADH + (n+1) H(+)(in) = a plastoquinol + NAD(+) + n H(+)(out). It catalyses the reaction a plastoquinone + NADPH + (n+1) H(+)(in) = a plastoquinol + NADP(+) + n H(+)(out). Its function is as follows. NDH-1 shuttles electrons from an unknown electron donor, via FMN and iron-sulfur (Fe-S) centers, to quinones in the respiratory and/or the photosynthetic chain. The immediate electron acceptor for the enzyme in this species is believed to be plastoquinone. Couples the redox reaction to proton translocation, and thus conserves the redox energy in a proton gradient. Cyanobacterial NDH-1 also plays a role in inorganic carbon-concentration. This chain is NAD(P)H-quinone oxidoreductase subunit 3, found in Synechococcus sp. (strain CC9311).